We begin with the raw amino-acid sequence, 494 residues long: Probable capsid protein (494 aa).

Residues 120-123 carry the Nuclear localization signal motif; it reads RPKR. The segment at 418-435 adopts a CCHC-type zinc-finger fold; sequence CRCWVCNIEGHYANECPN. A disordered region spans residues 474–494; that stretch reads LSSSDSELDDTCEESSSEESE. Positions 479–494 are enriched in acidic residues; sequence SELDDTCEESSSEESE.

Belongs to the caulimoviridae capsid protein family. Interacts (via nuclear localization signal) with host importin alpha.

It is found in the virion. The protein localises to the host nucleus. Its function is as follows. Self assembles to form an icosahedral capsid, about 50 nm in diameter, nm, composed of 420 subunits of the viral capsid protein. The capsid encapsulates the genomic dsDNA. Following virus entry into host cell, provides nuclear import of the viral genome. Virus particles do not enter the nucleus, but dock at the nuclear membrane through the interaction with host importins. The sequence is that of Probable capsid protein from Dianthus caryophyllus (Carnation).